The following is a 355-amino-acid chain: Chemerin-like receptor 2 (355 aa).

Over 1–41 (MEDLEETLFEEFENYSYALDYYSLESDLEEKVQLGVVHWVS) the chain is Extracellular. Asn14 carries N-linked (GlcNAc...) asparagine glycosylation. A helical transmembrane segment spans residues 42–62 (LVLYCLSFVLGIPGNAIVIWF). The Cytoplasmic segment spans residues 63–73 (TGFKWKRTVST). The chain crosses the membrane as a helical span at residues 74 to 94 (LWFLNLAIADFIFLLFLPLYI). Topologically, residues 95-112 (SYVVMNFHWPFGIWLCKA) are extracellular. The cysteines at positions 110 and 187 are disulfide-linked. A helical membrane pass occupies residues 113–133 (NSFTAQLNMFASVFFLTVISL). Residues 134-154 (DHYIHLIHPVLSHRHRTLKNS) are Cytoplasmic-facing. Residues 155–175 (LIVIIFIWLLASLIGGPALYF) traverse the membrane as a helical segment. At 176 to 210 (RDTVEFNNHTLCYNNFQKHDPDLTVIRHHVLTWVK) the chain is on the extracellular side. A helical membrane pass occupies residues 211-231 (YIVGYLFPLLTMSICYLCLIL). Residues 232-247 (KVKKRSILISSRHFWT) lie on the Cytoplasmic side of the membrane. Residues 248 to 268 (ILAVVVAFVVCWTPYHLFSIW) form a helical membrane-spanning segment. Residues 269–286 (ELTIHHNSYSHHVMQAGI) lie on the Extracellular side of the membrane. Residues 287-307 (PLSTGLAFLNSCLNPILYVLI) form a helical membrane-spanning segment. Residues 308-355 (SKKFQARFRSSVAEILKYTLWEVSCSGTVSEQLRNSETKNLCLLETAQ) lie on the Cytoplasmic side of the membrane.

Belongs to the chemokine-like receptor (CMKLR) family.

The protein localises to the cell membrane. Receptor for chemoattractant adipokine chemerin/RARRES2 suggesting a role for this receptor in the regulation of inflammation and energy homesotasis. Signals mainly via beta-arrestin pathway. Binding of RARRES2 activates weakly G proteins, calcium mobilization and MAPK1/MAPK3 (ERK1/2) phosphorylation too. Acts also as a receptor for TAFA1, mediates its effects on neuronal stem-cell proliferation and differentiation via the activation of ROCK/ERK and ROCK/STAT3 signaling pathway. The protein is Chemerin-like receptor 2 (CMKLR2) of Macaca fascicularis (Crab-eating macaque).